Reading from the N-terminus, the 189-residue chain is Xanthine phosphoribosyltransferase (189 aa).

Xanthine-binding residues include Leu-20 and Asn-27. 128–132 (ANGEA) lines the 5-phospho-alpha-D-ribose 1-diphosphate pocket. Lys-156 contributes to the xanthine binding site.

Belongs to the purine/pyrimidine phosphoribosyltransferase family. Xpt subfamily. As to quaternary structure, homodimer.

The protein resides in the cytoplasm. It catalyses the reaction XMP + diphosphate = xanthine + 5-phospho-alpha-D-ribose 1-diphosphate. The protein operates within purine metabolism; XMP biosynthesis via salvage pathway; XMP from xanthine: step 1/1. Functionally, converts the preformed base xanthine, a product of nucleic acid breakdown, to xanthosine 5'-monophosphate (XMP), so it can be reused for RNA or DNA synthesis. In Lactobacillus delbrueckii subsp. bulgaricus (strain ATCC 11842 / DSM 20081 / BCRC 10696 / JCM 1002 / NBRC 13953 / NCIMB 11778 / NCTC 12712 / WDCM 00102 / Lb 14), this protein is Xanthine phosphoribosyltransferase.